The primary structure comprises 301 residues: Homeobox protein Nkx-2.6 (301 aa).

The tract at residues 22–135 is disordered; the sequence is ERSCPAASPH…QPKARQRRKP (114 aa). The homeobox DNA-binding region spans 132 to 191; the sequence is RRKPRVLFSQAQVLALERRFKQQRYLSAPEREHLASALQLTSTQVKIWFQNRRYKCKRQR.

It belongs to the NK-2 homeobox family.

The protein resides in the nucleus. Its function is as follows. Acts as a transcriptional activator. In conjunction with NKX2-5, may play a role in both pharyngeal and cardiac embryonic development. In Homo sapiens (Human), this protein is Homeobox protein Nkx-2.6 (NKX2-6).